The sequence spans 296 residues: Urease accessory protein UreD (296 aa).

Belongs to the UreD family. UreD, UreF and UreG form a complex that acts as a GTP-hydrolysis-dependent molecular chaperone, activating the urease apoprotein by helping to assemble the nickel containing metallocenter of UreC. The UreE protein probably delivers the nickel.

The protein localises to the cytoplasm. Functionally, required for maturation of urease via the functional incorporation of the urease nickel metallocenter. The sequence is that of Urease accessory protein UreD from Synechococcus sp. (strain CC9311).